The sequence spans 232 residues: Phosphoribosylformylglycinamidine synthase subunit PurQ (232 aa).

The Glutamine amidotransferase type-1 domain maps to 2–232; that stretch reads KIAIIQFGGT…SMADYITENF (231 aa). C86 serves as the catalytic Nucleophile. Catalysis depends on residues H203 and E205.

In terms of assembly, part of the FGAM synthase complex composed of 1 PurL, 1 PurQ and 2 PurS subunits.

It is found in the cytoplasm. The enzyme catalyses N(2)-formyl-N(1)-(5-phospho-beta-D-ribosyl)glycinamide + L-glutamine + ATP + H2O = 2-formamido-N(1)-(5-O-phospho-beta-D-ribosyl)acetamidine + L-glutamate + ADP + phosphate + H(+). It carries out the reaction L-glutamine + H2O = L-glutamate + NH4(+). It participates in purine metabolism; IMP biosynthesis via de novo pathway; 5-amino-1-(5-phospho-D-ribosyl)imidazole from N(2)-formyl-N(1)-(5-phospho-D-ribosyl)glycinamide: step 1/2. Its function is as follows. Part of the phosphoribosylformylglycinamidine synthase complex involved in the purines biosynthetic pathway. Catalyzes the ATP-dependent conversion of formylglycinamide ribonucleotide (FGAR) and glutamine to yield formylglycinamidine ribonucleotide (FGAM) and glutamate. The FGAM synthase complex is composed of three subunits. PurQ produces an ammonia molecule by converting glutamine to glutamate. PurL transfers the ammonia molecule to FGAR to form FGAM in an ATP-dependent manner. PurS interacts with PurQ and PurL and is thought to assist in the transfer of the ammonia molecule from PurQ to PurL. The sequence is that of Phosphoribosylformylglycinamidine synthase subunit PurQ from Methanosarcina acetivorans (strain ATCC 35395 / DSM 2834 / JCM 12185 / C2A).